Reading from the N-terminus, the 243-residue chain is HTH-type transcriptional regulator MlrA (243 aa).

The 70-residue stretch at 3–72 (LYTIGEVALL…VSKVKVLLSS (70 aa)) folds into the HTH merR-type domain. The segment at residues 6–25 (IGEVALLCDINPVTLRAWQR) is a DNA-binding region (H-T-H motif).

Transcriptional activator of csgD, which is required for production of the curli (AgF). This is HTH-type transcriptional regulator MlrA from Salmonella typhimurium (strain SL1344).